The chain runs to 464 residues: MTQAQTWSQRFEKALHPAIATFNASIGFDIELIEYDLTGSVAHAKMLVKTGIISPEEGEALVNGLETIREEYRQGQFNPGVDAEDIHFAVERRLTEIAGDVGKKLHTGRSRNDQVGTDTRLYLKDQIQQIRTQILEFQGVLLDLATNHVHTLIPGYTHLQRAQPLSLAHHLLAYVEMAHRDWERLGEVYQRVNTSPLGCGALAGTTFPIDRHYSAELLGFDRVYANSLDGVSDRDWAIEFLSASSLILVHLSRLSEEIIFWASQEFGFITLTDSCSTGSSIMPQKKNPDVPELVRGKTGRVFGHLQGLLVLMKGLPLAYNKDLQEDKEALFDAVKTVKGCLEAMTILLSQGMEFRPQRLAEAVAEDFSNATDVADYLATKGVPFREAYNLVGKVVRTCLESGKLLKDLTLDEWKSLHPEFDVDIYDAIAPLQVVAARNSYGGTGFEQVKSALQNARDRWEAAQS.

The protein belongs to the lyase 1 family. Argininosuccinate lyase subfamily.

Its subcellular location is the cytoplasm. The catalysed reaction is 2-(N(omega)-L-arginino)succinate = fumarate + L-arginine. The protein operates within amino-acid biosynthesis; L-arginine biosynthesis; L-arginine from L-ornithine and carbamoyl phosphate: step 3/3. Strongly inhibited by L-arginine. Inhibitory effects are lowered at pH 7.0 compared to those at pH 8.0. At 37 degrees Celsius and pH 7.5, activity decreases to 73% and 31% in the presence of 1 mM and 10 mM arginine, respectively. Activity also decreases to 84%, 93%, 82% and 85% in the presence of 10 mM sodium citrate, citrulline, asparatate and glutamate, respectively. Activity decreases to 96% in presence of 1 mM L-lysine. Its function is as follows. Catalyzes the last step of arginine biosynthesis, the conversion of argininosuccinate into L-arginine and fumarate. The protein is Argininosuccinate lyase of Arthrospira platensis (strain NIES-39 / UTEX 3086 / IAM M-135) (Spirulina platensis).